Reading from the N-terminus, the 220-residue chain is Pyridoxine/pyridoxamine 5'-phosphate oxidase (220 aa).

Substrate contacts are provided by residues 8–11 (RKSY) and Lys66. Residues 61 to 66 (RVVLIK), 76 to 77 (FT), Arg82, and Lys83 contribute to the FMN site. The substrate site is built by Tyr123, Arg127, and Ser131. FMN-binding positions include 140–141 (QS) and Trp184. 190-192 (RLH) contributes to the substrate binding site. Arg194 contacts FMN.

This sequence belongs to the pyridoxamine 5'-phosphate oxidase family. Homodimer. The cofactor is FMN.

It catalyses the reaction pyridoxamine 5'-phosphate + O2 + H2O = pyridoxal 5'-phosphate + H2O2 + NH4(+). The catalysed reaction is pyridoxine 5'-phosphate + O2 = pyridoxal 5'-phosphate + H2O2. Its pathway is cofactor metabolism; pyridoxal 5'-phosphate salvage; pyridoxal 5'-phosphate from pyridoxamine 5'-phosphate: step 1/1. It participates in cofactor metabolism; pyridoxal 5'-phosphate salvage; pyridoxal 5'-phosphate from pyridoxine 5'-phosphate: step 1/1. Functionally, catalyzes the oxidation of either pyridoxine 5'-phosphate (PNP) or pyridoxamine 5'-phosphate (PMP) into pyridoxal 5'-phosphate (PLP). In Albidiferax ferrireducens (strain ATCC BAA-621 / DSM 15236 / T118) (Rhodoferax ferrireducens), this protein is Pyridoxine/pyridoxamine 5'-phosphate oxidase.